A 288-amino-acid chain; its full sequence is Syntaxin PEP12 (288 aa).

Residues 1 to 268 lie on the Cytoplasmic side of the membrane; that stretch reads MSEDEFFGGD…RYQKRTSRWR (268 aa). Residues S2 and S23 each carry the phosphoserine modification. The 63-residue stretch at 195–257 folds into the t-SNARE coiled-coil homology domain; sequence QNLIEQRDQE…QLASDELRKA (63 aa). A helical; Anchor for type IV membrane protein transmembrane segment spans residues 269–288; it reads VYLLIVLLVMLLFIFLIMKL.

This sequence belongs to the syntaxin family. Post-translationally, ubiquitinated.

The protein localises to the membrane. Plays a role in the sorting and targeting of vacuolar proteases. The chain is Syntaxin PEP12 (PEP12) from Saccharomyces cerevisiae (strain ATCC 204508 / S288c) (Baker's yeast).